The primary structure comprises 151 residues: uncharacterized protein (151 aa).

A run of 3 helical transmembrane segments spans residues 12–32 (LAYFIDGIIVSVPSYIILFII), 59–79 (LAFLPTMLIMIVISVLYYGLL), and 114–134 (YFAYILSGIIFYIGFIMIAFG).

The protein resides in the cell membrane. This is an uncharacterized protein from Bacillus subtilis (strain 168).